Consider the following 252-residue polypeptide: Probable phosphatase Shewana3_2794 (252 aa).

Zn(2+) is bound by residues histidine 8, histidine 10, histidine 16, histidine 41, glutamate 74, histidine 102, histidine 132, aspartate 193, and histidine 195.

Belongs to the PHP family. Zn(2+) serves as cofactor.

The protein is Probable phosphatase Shewana3_2794 of Shewanella sp. (strain ANA-3).